The chain runs to 140 residues: MPTINQLVRKGRTDKVWKSKSPALNKGFNSLKKKSTDISAPQKRGVCTRVGTMTPKKPNSALRKYARVRLTNGIEVTAYIPGIGHNLQEHSVVLIRGGRVKDLPGVRYHIVRGALDTAGVDKRMQGRSKYGTKKPKAAKK.

3-methylthioaspartic acid is present on Asp102.

It belongs to the universal ribosomal protein uS12 family. In terms of assembly, part of the 30S ribosomal subunit. Contacts proteins S8 and S17. May interact with IF1 in the 30S initiation complex.

Its function is as follows. With S4 and S5 plays an important role in translational accuracy. In terms of biological role, interacts with and stabilizes bases of the 16S rRNA that are involved in tRNA selection in the A site and with the mRNA backbone. Located at the interface of the 30S and 50S subunits, it traverses the body of the 30S subunit contacting proteins on the other side and probably holding the rRNA structure together. The combined cluster of proteins S8, S12 and S17 appears to hold together the shoulder and platform of the 30S subunit. This is Small ribosomal subunit protein uS12 from Bacillus cytotoxicus (strain DSM 22905 / CIP 110041 / 391-98 / NVH 391-98).